Here is a 1248-residue protein sequence, read N- to C-terminus: Kinesin-like protein KIN-14I (1248 aa).

A MyTH4 domain is found at 88-244 (FQKDPIPTSL…PAREEIEALL (157 aa)). The FERM domain occupies 249–563 (LTTIVFFLDE…HINDVMLRRY (315 aa)). A coiled-coil region spans residues 586–659 (NIEIYEKRVQ…LDKLKSLCDE (74 aa)). Residues 675–704 (ETRLKSGQGQESSNRTGVSGNHFERDTLPT) form a disordered region. The span at 679–693 (KSGQGQESSNRTGVS) shows a compositional bias: polar residues. The stretch at 708-799 (VNNSIEMLAK…TRSLNVTEST (92 aa)) forms a coiled coil. Residues 872–1193 (KIRVFCRLRP…LMYASRVRCI (322 aa)) enclose the Kinesin motor domain. 953–960 (GQTGSGKT) is a binding site for ATP. The calmodulin-binding stretch occupies residues 1201–1223 (VAPKEIMRLKKLIAYWKEQAGKR). Residues 1220–1248 (AGKRSEDDDLEEIQEERTPKEKADNRLTS) are disordered. Over residues 1234–1248 (EERTPKEKADNRLTS) the composition is skewed to basic and acidic residues.

This sequence belongs to the TRAFAC class myosin-kinesin ATPase superfamily. Kinesin family. KIN-14 subfamily. As to quaternary structure, binds microtubules via its N-terminus containing the MyTH4 domain and binds F-actin via its FERM domain. Binding to calmodulin inhibits microtubule binding activity.

It localises to the cytoplasm. Its subcellular location is the cytoskeleton. Functionally, minus-end microtubule-dependent motor protein involved in the regulation of cell division. In Oryza sativa subsp. japonica (Rice), this protein is Kinesin-like protein KIN-14I.